A 1528-amino-acid polypeptide reads, in one-letter code: Multidrug resistance-associated protein 1 (1528 aa).

Residues 1-33 are Extracellular-facing; sequence MALRSFCSADGSDPLWDWNVTWHTSNPDFTKCF. An N-linked (GlcNAc...) asparagine glycan is attached at Asn19. A helical membrane pass occupies residues 34-54; it reads QNTVLTWVPCFYLWSCFPLYF. Over 55–74 the chain is Cytoplasmic; that stretch reads FYLSRHDRGYIQMTHLNKTK. A helical membrane pass occupies residues 75–95; sequence TALGFFLWIICWADLFYSFWE. Over 96-100 the chain is Extracellular; it reads RSQGV. A helical membrane pass occupies residues 101–121; sequence LRAPVLLVSPTLLGITMLLAT. Residues 122–133 lie on the Cytoplasmic side of the membrane; it reads FLIQLERRKGVQ. A helical transmembrane segment spans residues 134–154; sequence SSGIMLTFWLVALLCALAILR. Over 155-172 the chain is Extracellular; sequence SKIISALKKDAHVDVFRD. The helical transmembrane segment at 173–193 threads the bilayer; that stretch reads STFYLYFTLVLVQLVLSCFSD. The Cytoplasmic portion of the chain corresponds to 194–317; the sequence is CSPLFSETVH…KDREPSLFKV (124 aa). Tyr277 carries the phosphotyrosine modification. Residue Ser290 is modified to Phosphoserine. The chain crosses the membrane as a helical span at residues 318–338; the sequence is LYKTFGPYFLMSFLYKALHDL. Positions 326–609 constitute an ABC transmembrane type-1 1 domain; sequence FLMSFLYKAL…LPMVISSIVQ (284 aa). The Extracellular portion of the chain corresponds to 339–364; it reads MMFAGPKILELIINFVNDREAPDWQG. The chain crosses the membrane as a helical span at residues 365–385; that stretch reads YFYTALLFVSACLQTLALHQY. Residues 386 to 441 lie on the Cytoplasmic side of the membrane; sequence FHICFVSGMRIKTAVVGAVYRKALLITNAARKSSTVGEIVNLMSVDAQRFMDLATY. Residues 442–462 form a helical membrane-spanning segment; it reads INMIWSAPLQVILALYFLWLS. At 463–465 the chain is on the extracellular side; sequence LGP. The helical transmembrane segment at 466–486 threads the bilayer; sequence SVLAGVAVMILMVPLNAVMAM. Residues 487 to 548 lie on the Cytoplasmic side of the membrane; it reads KTKTYQVAHM…VLKKSAYLAA (62 aa). Lys504 carries the N6-succinyllysine modification. A helical transmembrane segment spans residues 549-569; sequence VGTFTWVCTPFLVALSTFAVF. The Extracellular segment spans residues 570 to 591; it reads VTVDERNILDAKKAFVSLALFN. Residues 592 to 612 traverse the membrane as a helical segment; the sequence is ILRFPLNILPMVISSIVQASV. Residues 613-963 lie on the Cytoplasmic side of the membrane; the sequence is SLKRLRIFLS…VQLSVYWNYM (351 aa). The ABC transporter 1 domain occupies 644–868; that stretch reads ITVKNATFTW…DGAFAEFLRT (225 aa). Residue 678–685 participates in ATP binding; it reads GQVGCGKS. Disordered regions lie at residues 876-895 and 909-929; these read LASEDDSVSGSGKESKPVEN and RHLSNSSSHSGDTSQQHSSIA. Residues Ser878, Ser882, Ser912, and Ser927 each carry the phosphoserine modification. A compositionally biased stretch (polar residues) spans 910–929; the sequence is HLSNSSSHSGDTSQQHSSIA. The chain crosses the membrane as a helical span at residues 964–984; sequence KAIGLFITFLSIFLFLCNHVS. One can recognise an ABC transmembrane type-1 2 domain in the interval 971–1253; sequence TFLSIFLFLC…LVRMSSEMET (283 aa). The Extracellular portion of the chain corresponds to 985 to 1022; that stretch reads ALASNYWLSLWTDDPPVVNGTQANRNFRLSVYGALGIL. Residue Asn1003 is glycosylated (N-linked (GlcNAc...) asparagine). A helical membrane pass occupies residues 1023–1043; sequence QGAAIFGYSMAVSIGGIFASR. Over 1044–1086 the chain is Cytoplasmic; the sequence is RLHLDLLYNVLRSPMSFFERTPSGNLVNRFSKELDTVDSMIPQ. A helical membrane pass occupies residues 1087-1107; sequence VIKMFMGSLFSVIGAVIIILL. A topological domain (extracellular) is located at residue Ala1108. The helical transmembrane segment at 1109–1129 threads the bilayer; it reads TPIAAVIIPPLGLVYFFVQRF. Residues 1130 to 1200 lie on the Cytoplasmic side of the membrane; the sequence is YVASSRQLKR…VANRWLAVRL (71 aa). Residues 1201–1221 form a helical membrane-spanning segment; sequence ECVGNCIVLFAALFAVISRHS. Residues 1222–1223 are Extracellular-facing; that stretch reads LS. The helical transmembrane segment at 1224-1244 threads the bilayer; that stretch reads AGLVGLSVSYSLQITAYLNWL. The Cytoplasmic segment spans residues 1245-1528; the sequence is VRMSSEMETN…YSMAKDAGLV (284 aa). In terms of domain architecture, ABC transporter 2 spans 1290-1524; it reads VEFRDYCLRY…RGIFYSMAKD (235 aa). 1324-1331 lines the ATP pocket; it reads GRTGAGKS.

It belongs to the ABC transporter superfamily. ABCC family. Conjugate transporter (TC 3.A.1.208) subfamily.

It is found in the cell membrane. It localises to the basolateral cell membrane. It carries out the reaction ATP + H2O + xenobioticSide 1 = ADP + phosphate + xenobioticSide 2.. The enzyme catalyses an S-substituted glutathione(in) + ATP + H2O = an S-substituted glutathione(out) + ADP + phosphate + H(+). It catalyses the reaction leukotriene C4(in) + ATP + H2O = leukotriene C4(out) + ADP + phosphate + H(+). The catalysed reaction is sphing-4-enine 1-phosphate(in) + ATP + H2O = sphing-4-enine 1-phosphate(out) + ADP + phosphate + H(+). It carries out the reaction 17beta-estradiol 17-O-(beta-D-glucuronate)(in) + ATP + H2O = 17beta-estradiol 17-O-(beta-D-glucuronate)(out) + ADP + phosphate + H(+). The enzyme catalyses vincristine(in) + ATP + H2O = vincristine(out) + ADP + phosphate + H(+). It catalyses the reaction daunorubicin(in) + ATP + H2O = daunorubicin(out) + ADP + phosphate + H(+). The catalysed reaction is 2',3'-cGAMP(in) + ATP + H2O = 2',3'-cGAMP(out) + ADP + phosphate + H(+). It carries out the reaction S-[(2E,6E,10E)-geranylgeranyl]-L-glutathione(in) + ATP + H2O = S-[(2E,6E,10E)-geranylgeranyl]-L-glutathione(out) + ADP + phosphate + H(+). The enzyme catalyses prostaglandin A2-S-(R)-glutathione(in) + ATP + H2O = prostaglandin A2-S-(R)-glutathione(out) + ADP + phosphate + H(+). It catalyses the reaction prostaglandin A2-S-(S)-glutathione(in) + ATP + H2O = prostaglandin A2-S-(S)-glutathione(out) + ADP + phosphate + H(+). Its activity is regulated as follows. MK 571 inhibits sphingosine 1-phosphate and leukotriene C4 export. Its function is as follows. Mediates export of organic anions and drugs from the cytoplasm. Mediates ATP-dependent transport of glutathione and glutathione conjugates, leukotriene C4, estradiol-17-beta-o-glucuronide, methotrexate, antiviral drugs and other xenobiotics. Confers resistance to anticancer drugs by decreasing accumulation of drugs in cells, and by mediating ATP- and GSH-dependent drug export. Hydrolyzes ATP with low efficiency. Catalyzes the export of sphingosine 1-phosphate from mast cells independently of their degranulation. Participates in inflammatory response by allowing export of leukotriene C4 from leukotriene C4-synthesizing cells. Mediates ATP-dependent, GSH-independent cyclic GMP-AMP (cGAMP) export. Thus, by limiting intracellular cGAMP concentrations negatively regulates the cGAS-STING pathway. Exports S-geranylgeranyl-glutathione (GGG) in lymphoid cells and stromal compartments of lymphoid organs. ABCC1 (via extracellular transport) with GGT5 (via GGG catabolism) establish GGG gradients within lymphoid tissues to position P2RY8-positive lymphocytes at germinal centers in lymphoid follicles and restrict their chemotactic transmigration from blood vessels to the bone marrow parenchyma. Mediates basolateral export of GSH-conjugated R- and S-prostaglandin A2 diastereomers in polarized epithelial cells. The sequence is that of Multidrug resistance-associated protein 1 from Mus musculus (Mouse).